Reading from the N-terminus, the 218-residue chain is MGQKINPLGFRLGTTQGHHSLWFSQPKNYSEGLQEDQKIRDCIKNYVQKNMRTSSGVEGIARIEIKKRIDLIQVIIFMGFPKLLIESRPRGIEELQTTLQKEFNCVNRKLNIAVTRIAKPYGNPNILAEFIAGQLKNRVSFRKAMKKAIELTEQADTKGIQIQIAGRIDGKEIARVEWIREGRVPLQTIRAKIDYCSYTVRTIYGVLGIKIWIFLDQE.

The region spanning 47 to 118 is the KH type-2 domain; that stretch reads VQKNMRTSSG…KLNIAVTRIA (72 aa).

This sequence belongs to the universal ribosomal protein uS3 family. As to quaternary structure, part of the 30S ribosomal subunit.

Its subcellular location is the plastid. It is found in the chloroplast. The sequence is that of Small ribosomal subunit protein uS3c (rps3) from Nicotiana tomentosiformis (Tobacco).